A 201-amino-acid polypeptide reads, in one-letter code: Potassium-transporting ATPase KdpC subunit (201 aa).

A helical membrane pass occupies residues 10 to 30 (VLLVALTAVTGLAYPLAVTGI).

It belongs to the KdpC family. The system is composed of three essential subunits: KdpA, KdpB and KdpC.

It localises to the cell inner membrane. Its function is as follows. Part of the high-affinity ATP-driven potassium transport (or Kdp) system, which catalyzes the hydrolysis of ATP coupled with the electrogenic transport of potassium into the cytoplasm. This subunit acts as a catalytic chaperone that increases the ATP-binding affinity of the ATP-hydrolyzing subunit KdpB by the formation of a transient KdpB/KdpC/ATP ternary complex. The chain is Potassium-transporting ATPase KdpC subunit from Methylorubrum extorquens (strain PA1) (Methylobacterium extorquens).